Consider the following 83-residue polypeptide: Short neurotoxin C (83 aa).

Positions 1-21 (MKTLLLTLVVVTMVCLDLAYT) are cleaved as a signal peptide. 4 disulfide bridges follow: cysteine 24–cysteine 45, cysteine 38–cysteine 62, cysteine 64–cysteine 75, and cysteine 76–cysteine 81.

The protein belongs to the three-finger toxin family. Short-chain subfamily. Type I alpha-neurotoxin sub-subfamily. As to expression, expressed by the venom gland.

It localises to the secreted. In terms of biological role, binds to muscle nicotinic acetylcholine receptor (nAChR) and inhibit acetylcholine from binding to the receptor, thereby impairing neuromuscular transmission. The sequence is that of Short neurotoxin C from Laticauda colubrina (Yellow-lipped sea krait).